Consider the following 293-residue polypeptide: MTHDYIVKALAFDGEIRAYAALTTETVQEAQTRHYTWPTASAAMGRTMTATAMMGAMLKGDQKLTVTVDGQGPIGRIIADANAKGEVRAYVDHPQTHFPLNEQGKLDVRRAVGTNGSIMVVKDVGMKDYFSGASPIVSGELGEDFTYYYATSEQTPSSVGLGVLVNPDNTIKAAGGFIIQVMPGAKDETISKLEKAISEMTPVSKLIEQGLTPEGLLNEILGEDHVQILEKMPVQFECNCSHEKFLNAIKGLGEAEIQNMIKEDHGAEAVCHFCGNKYKYTEEELNVLLESLA.

Disulfide bonds link cysteine 238–cysteine 240 and cysteine 271–cysteine 274.

Belongs to the HSP33 family. Post-translationally, under oxidizing conditions two disulfide bonds are formed involving the reactive cysteines. Under reducing conditions zinc is bound to the reactive cysteines and the protein is inactive.

Its subcellular location is the cytoplasm. Redox regulated molecular chaperone. Protects both thermally unfolding and oxidatively damaged proteins from irreversible aggregation. Plays an important role in the bacterial defense system toward oxidative stress. The protein is 33 kDa chaperonin of Staphylococcus aureus (strain USA300).